A 364-amino-acid chain; its full sequence is Nucleoporin SEH1 (364 aa).

6 WD repeats span residues 10-49 (DHKD…EWNC), 55-96 (THSG…SNDK), 111-152 (DSRT…NLSQ), 160-210 (SCKL…RKYA), 217-258 (TVTD…KESS), and 275-314 (GHNS…NWKC). Residues 326 to 364 (NGAAGQAGTPGAAGTPGGPASQNALQAVAGRKKAQLMPG) are disordered. Low complexity predominate over residues 327–338 (GAAGQAGTPGAA). Positions 355 to 364 (GRKKAQLMPG) are enriched in basic residues.

Belongs to the WD repeat SEC13 family. In terms of assembly, component of the Nup107-160 subcomplex of the nuclear pore complex (NPC). The Nup107-160 subcomplex includes NUP160, NUP133, NUP107, NUP98, NUP85, NUP43, NUP37, SEH1 and SEC13. Component of the GATOR2 subcomplex, composed of MIOS, SEC13, SEH1L, WDR24 and WDR59. The GATOR2 complex interacts with CASTOR1 and CASTOR2; the interaction is negatively regulated by arginine. The GATOR2 complex interacts with SESN1, SESN2 and SESN3; the interaction is negatively regulated by amino acids.

The protein resides in the chromosome. The protein localises to the centromere. Its subcellular location is the kinetochore. It localises to the nucleus. It is found in the nuclear pore complex. The protein resides in the lysosome membrane. The GATOR2 complex is negatively regulated by the upstream amino acid sensors CASTOR1 and SESN2, which sequester the GATOR2 complex in absence of amino acids. In the presence of abundant amino acids, GATOR2 is released from CASTOR1 and SESN2 and activated. In terms of biological role, component of the Nup107-160 subcomplex of the nuclear pore complex (NPC). The Nup107-160 subcomplex is required for the assembly of a functional NPC. The Nup107-160 subcomplex is also required for normal kinetochore microtubule attachment, mitotic progression and chromosome segregation. This subunit plays a role in recruitment of the Nup107-160 subcomplex to the kinetochore. As a component of the GATOR2 complex, functions as an activator of the amino acid-sensing branch of the mTORC1 signaling pathway. The GATOR2 complex indirectly activates mTORC1 through the inhibition of the GATOR1 subcomplex. GATOR2 probably acts as an E3 ubiquitin-protein ligase toward GATOR1. In the presence of abundant amino acids, the GATOR2 complex mediates ubiquitination of the NPRL2 core component of the GATOR1 complex, leading to GATOR1 inactivation. In the absence of amino acids, GATOR2 is inhibited, activating the GATOR1 complex. This is Nucleoporin SEH1 (seh1l) from Osmerus mordax (Rainbow smelt).